We begin with the raw amino-acid sequence, 655 residues long: Macrolide export ATP-binding/permease protein MacB (655 aa).

The ABC transporter domain occupies 6-244 (IELRDVWREF…DALAGDEGPE (239 aa)). 42-49 (GASGSGKS) lines the ATP pocket. Residues 225–252 (DQARPDAPPLDALAGDEGPEAPRPAPQP) are disordered. 4 helical membrane-spanning segments follow: residues 280 to 300 (LTML…ALGA), 527 to 547 (LTLL…IGVM), 583 to 603 (VLVC…IGVL), and 620 to 640 (SMVL…FLPA).

Belongs to the ABC transporter superfamily. Macrolide exporter (TC 3.A.1.122) family. In terms of assembly, homodimer.

Its subcellular location is the cell inner membrane. Functionally, non-canonical ABC transporter that contains transmembrane domains (TMD), which form a pore in the inner membrane, and an ATP-binding domain (NBD), which is responsible for energy generation. Confers resistance against macrolides. This Bordetella avium (strain 197N) protein is Macrolide export ATP-binding/permease protein MacB.